Consider the following 117-residue polypeptide: Large ribosomal subunit protein bL20 (117 aa).

The protein belongs to the bacterial ribosomal protein bL20 family.

Its function is as follows. Binds directly to 23S ribosomal RNA and is necessary for the in vitro assembly process of the 50S ribosomal subunit. It is not involved in the protein synthesizing functions of that subunit. The chain is Large ribosomal subunit protein bL20 from Limosilactobacillus reuteri (strain DSM 20016) (Lactobacillus reuteri).